The sequence spans 370 residues: UDP-N-acetylglucosamine--N-acetylmuramyl-(pentapeptide) pyrophosphoryl-undecaprenol N-acetylglucosamine transferase (370 aa).

Residues Thr14–Gly16, Asn125, Arg168, Ser196, and Gln297 contribute to the UDP-N-acetyl-alpha-D-glucosamine site.

Belongs to the glycosyltransferase 28 family. MurG subfamily.

The protein resides in the cell inner membrane. It carries out the reaction di-trans,octa-cis-undecaprenyl diphospho-N-acetyl-alpha-D-muramoyl-L-alanyl-D-glutamyl-meso-2,6-diaminopimeloyl-D-alanyl-D-alanine + UDP-N-acetyl-alpha-D-glucosamine = di-trans,octa-cis-undecaprenyl diphospho-[N-acetyl-alpha-D-glucosaminyl-(1-&gt;4)]-N-acetyl-alpha-D-muramoyl-L-alanyl-D-glutamyl-meso-2,6-diaminopimeloyl-D-alanyl-D-alanine + UDP + H(+). The protein operates within cell wall biogenesis; peptidoglycan biosynthesis. In terms of biological role, cell wall formation. Catalyzes the transfer of a GlcNAc subunit on undecaprenyl-pyrophosphoryl-MurNAc-pentapeptide (lipid intermediate I) to form undecaprenyl-pyrophosphoryl-MurNAc-(pentapeptide)GlcNAc (lipid intermediate II). The sequence is that of UDP-N-acetylglucosamine--N-acetylmuramyl-(pentapeptide) pyrophosphoryl-undecaprenol N-acetylglucosamine transferase from Nitrobacter hamburgensis (strain DSM 10229 / NCIMB 13809 / X14).